Here is a 787-residue protein sequence, read N- to C-terminus: MIADGSEDEEKWLAAGAAAFKQNAFYMQRAIDSNNLKDALKYSAQMLSELRTSKLSPHKYYDLYMRAFDELRKLEIFFMEETRRGCSVIELYELVQHAGNILPRLYLLCTAGSVYIKTKEAPAKEILKDLVEMCRGIQHPLRGLFLRSYLAQISRDKLPDIGSEYEGDADTVIDAVEFVLLNFTEMNKLWVRMQHQGPAREKERREKERGELRDLVGKNLHVLSQLEGVDLDMYRDTVLPRVLEQIVNCRDEIAQYYLIDCIIQVFPDEYHLQTLDVLLGACPQLQASVDIMTVLSRLMERLSNYAALNAEVLPYFLQVEAFSKLNNAIGKVIEAQEDMPILSAVTLYSSLLKFTLHVHPDRLDYADQVLGSCVKQLSGKGKIDDTRATKELVSLLSAPLEKYNDVVTALKLTNYPLVVEYLDTETKRIMATVIVRSIMKNNTLITTAEKVEALFELIKGIINDLDEPQGLEVDEDDFQEEQNSVALLIHMLYNDDPEEMFKIVNVLKKHFLTGGPKRLKFTIPPLVVSTLKLIRRLPVEGDNPFGKEASVTATKIFQFLNQIIEALPNVPSPDLAFRLYLQCAEAADKCDEEPIAYEFFTQAYILYEEEISDSKAQVTALQLIIGTLQRMQVFGVENRDTLTHKATGYAAKLLKKPDQCRAVYACSHLFWLEDRETIQDGERVLLCLKRALKIANSAQQVANTARGSTGSVTLFIEILNKYLYFYEKGVPQITVESVESLIKLIKNEESMPSDPSAESFFATTLEFMEFQKQKEGAIGERYQAIKV.

Residue M1 is modified to N-acetylmethionine.

This sequence belongs to the VPS35 family. As to quaternary structure, component of the retromer complex which consists of VPS29 (MAG1), VPS26 (VPS26A or VPS26B), VPS35 (VPS35A or VPS35B or VPS35C), VPS5/17 (SNX1 or SNX2A or SNX2B). Component of a retromer subcomplex consisting of VPS29 (MAG1), VPS26 (VPS26A or VPS26B), VPS35 (VPS35A or VPS35B or VPS35C). Interacts with RABG3F.

It is found in the cytoplasm. Its subcellular location is the endosome membrane. The protein resides in the prevacuolar compartment membrane. The protein localises to the golgi apparatus. It localises to the trans-Golgi network membrane. In terms of biological role, plays a role in vesicular protein sorting. Component of the membrane-associated retromer complex which is essential in endosome-to-Golgi retrograde transport. Also involved in the efficient sorting of seed storage proteins. Binds alone to endosomal membranes and is required for recruitment of VPS26 and VPS29 to membrane. The VPS29-VPS26-VPS35 subcomplex may be involved in recycling of specific cargos from endosome to the plasma membrane. The chain is Vacuolar protein sorting-associated protein 35A (VPS35A) from Arabidopsis thaliana (Mouse-ear cress).